The following is a 190-amino-acid chain: Adenylate kinase (190 aa).

10-15 lines the ATP pocket; that stretch reads AAGKGT. The NMP stretch occupies residues 30–59; the sequence is STGDMLRAAIASGSELGQRVSGIMERGELV. AMP-binding positions include threonine 31, arginine 36, 57 to 59, 85 to 88, and glutamine 92; these read ELV and GFPR. The interval 126 to 136 is LID; the sequence is GRFAESGRADD. Arginine 127 contacts ATP. AMP is bound by residues arginine 133 and arginine 144. Position 172 (glycine 172) interacts with ATP.

The protein belongs to the adenylate kinase family. Monomer.

The protein resides in the cytoplasm. The enzyme catalyses AMP + ATP = 2 ADP. It participates in purine metabolism; AMP biosynthesis via salvage pathway; AMP from ADP: step 1/1. Catalyzes the reversible transfer of the terminal phosphate group between ATP and AMP. Plays an important role in cellular energy homeostasis and in adenine nucleotide metabolism. This is Adenylate kinase from Phenylobacterium zucineum (strain HLK1).